Consider the following 828-residue polypeptide: DNA gyrase subunit A (828 aa).

The Topo IIA-type catalytic domain maps to 38 to 501 (LPDARDGLKP…SYESIDTEDL (464 aa)). Catalysis depends on Tyr-126, which acts as the O-(5'-phospho-DNA)-tyrosine intermediate. Residues 528-534 (QNRGGKG) carry the GyrA-box motif.

Belongs to the type II topoisomerase GyrA/ParC subunit family. In terms of assembly, heterotetramer, composed of two GyrA and two GyrB chains. In the heterotetramer, GyrA contains the active site tyrosine that forms a transient covalent intermediate with DNA, while GyrB binds cofactors and catalyzes ATP hydrolysis.

The protein localises to the cytoplasm. It catalyses the reaction ATP-dependent breakage, passage and rejoining of double-stranded DNA.. Functionally, a type II topoisomerase that negatively supercoils closed circular double-stranded (ds) DNA in an ATP-dependent manner to modulate DNA topology and maintain chromosomes in an underwound state. Negative supercoiling favors strand separation, and DNA replication, transcription, recombination and repair, all of which involve strand separation. Also able to catalyze the interconversion of other topological isomers of dsDNA rings, including catenanes and knotted rings. Type II topoisomerases break and join 2 DNA strands simultaneously in an ATP-dependent manner. The protein is DNA gyrase subunit A of Helicobacter pylori (strain J99 / ATCC 700824) (Campylobacter pylori J99).